A 426-amino-acid polypeptide reads, in one-letter code: C4-dicarboxylate transport protein (426 aa).

Transmembrane regions (helical) follow at residues 8–28, 44–64, 78–98, 148–168, 173–193, 222–242, 297–317, and 355–375; these read VLYV…HFYP, LIKM…IAGM, LLYF…ATHV, GEIL…ATAG, VVTG…RIIT, LIGT…GIIA, GYSF…LFIA, and AATL…ILGI.

It belongs to the dicarboxylate/amino acid:cation symporter (DAACS) (TC 2.A.23) family.

Its subcellular location is the cell inner membrane. In terms of biological role, responsible for the transport of dicarboxylates such as succinate, fumarate, and malate from the periplasm across the membrane. The protein is C4-dicarboxylate transport protein of Paraburkholderia xenovorans (strain LB400).